A 432-amino-acid polypeptide reads, in one-letter code: RNA exonuclease 4 (432 aa).

The segment covering 42–54 (ARKKAKKKFRKSK) has biased composition (basic residues). A disordered region spans residues 42–177 (ARKKAKKKFR…AKKRTYSDIS (136 aa)). Residues 121–137 (KASDKSKGDKQRTEKAK) are compositionally biased toward basic and acidic residues. Serine 123 carries the phosphoserine modification. Residue lysine 127 forms a Glycyl lysine isopeptide (Lys-Gly) (interchain with G-Cter in SUMO2) linkage. The Exonuclease domain occupies 230 to 381 (KRLGQKKRTI…PSLKRLSEKI (152 aa)).

The protein belongs to the REXO4 family. As to quaternary structure, can bind ESR1 and ESR2. This interaction is abrogated by estrogen and augmented by tamoxifen treatment.

It is found in the nucleus. Its subcellular location is the nucleolus. May function as an exonuclease. This chain is RNA exonuclease 4 (Rexo4), found in Mus musculus (Mouse).